Reading from the N-terminus, the 3148-residue chain is Huntingtin (3148 aa).

HEAT repeat units lie at residues 149–186 (PYLV…ALGH) and 191–228 (GEIK…HSRR). Composition is skewed to polar residues over residues 428-451 (QQPR…SSEQ), 475-486 (SRSSSCGANITP), and 516-526 (PSDSSQTTTEG). Disordered stretches follow at residues 428 to 532 (QQPR…SAVT) and 557 to 622 (QDEE…NKMS). Basic and acidic residues predominate over residues 602–621 (SVDRFIPKDEPPEPEPDNKM). 2 HEAT repeats span residues 760 to 797 (LSLV…SLCG) and 861 to 898 (LQER…RLFF). Composition is skewed to low complexity over residues 1025–1042 (TLSV…TTSS) and 1105–1115 (SSSSTNTSGGT). Disordered regions lie at residues 1025–1047 (TLSV…VDPE), 1098–1117 (WAGE…GTHK), and 1158–1215 (GPPV…GSTA). A compositionally biased stretch (polar residues) spans 1201 to 1215 (EANTGRPTESTGSTA). Residues 1419–1456 (LFEPLVIKALKQYTTSTSVALQRQVLDLLAQLVQLRVN) form an HEAT 5 repeat. Over residues 1712 to 1730 (PNLSPSDQPAGDGQQNQEP) the composition is skewed to polar residues. Disordered regions lie at residues 1712-1735 (PNLS…GEAQ) and 2072-2091 (VSDT…DGDP). Positions 2072 to 2084 (VSDTSSPSTPVTS) are enriched in low complexity. Residues 2398 to 2407 (IIISLSRLPL) carry the Nuclear export signal motif. Residues 2639-2649 (EWGEDEDDEAD) are compositionally biased toward acidic residues. Positions 2639 to 2664 (EWGEDEDDEADPPAPTSPPLSPINSR) are disordered. Residues 2650–2659 (PPAPTSPPLS) are compositionally biased toward pro residues.

It belongs to the huntingtin family.

It is found in the cytoplasm. Its subcellular location is the nucleus. In terms of biological role, may play a role in microtubule-mediated transport or vesicle function. In Takifugu rubripes (Japanese pufferfish), this protein is Huntingtin (htt).